Consider the following 855-residue polypeptide: Lon protease (855 aa).

The region spanning 45–288 (IYLLTVKNVV…ETFRFLNIEY (244 aa)) is the Lon N-terminal domain. 439-446 (GPPGVGKT) contributes to the ATP binding site. In terms of domain architecture, Lon proteolytic spans 674–855 (IQVPGVVTGL…NEVIDLSIIK (182 aa)). Active-site residues include Ser761 and Lys804.

This sequence belongs to the peptidase S16 family. Homohexamer. Organized in a ring with a central cavity.

Its subcellular location is the cytoplasm. It carries out the reaction Hydrolysis of proteins in presence of ATP.. In terms of biological role, ATP-dependent serine protease that mediates the selective degradation of mutant and abnormal proteins as well as certain short-lived regulatory proteins. Required for cellular homeostasis and for survival from DNA damage and developmental changes induced by stress. Degrades polypeptides processively to yield small peptide fragments that are 5 to 10 amino acids long. Binds to DNA in a double-stranded, site-specific manner. This chain is Lon protease, found in Karelsulcia muelleri (strain GWSS) (Sulcia muelleri).